Consider the following 270-residue polypeptide: Phosphonoacetaldehyde hydrolase (270 aa).

The active-site Nucleophile is Asp11. Mg(2+) contacts are provided by Asp11 and Ala13. Lys53 serves as the catalytic Schiff-base intermediate with substrate. Asp187 is a Mg(2+) binding site.

Belongs to the HAD-like hydrolase superfamily. PhnX family. Homodimer. The cofactor is Mg(2+).

It catalyses the reaction phosphonoacetaldehyde + H2O = acetaldehyde + phosphate + H(+). Its function is as follows. Involved in phosphonate degradation. This chain is Phosphonoacetaldehyde hydrolase, found in Salmonella enteritidis PT4 (strain P125109).